The sequence spans 632 residues: X-ray repair cross-complementing protein 5 (632 aa).

The active-site Schiff-base intermediate with DNA; for 5'-deoxyribose-5-phosphate lyase activity is the arginine 52. In terms of domain architecture, Ku spans 283–490; that stretch reads LYLNKDLSFS…VDKMKGIIQK (208 aa). The segment at 555-578 is disordered; sequence DYSPEGKAAKRKQAGDAQAEKRPK. The region spanning 595–629 is the SAP domain; that stretch reads LGKLTVSALKDTCRHYGLRSGGKKQELIDALTEYF.

It belongs to the ku70 family. As to quaternary structure, heterodimer composed of XRCC5/Ku80 and XRCC6/Ku70. Component of the core long-range non-homologous end joining (NHEJ) complex (also named DNA-PK complex) composed of PRKDC, LIG4, XRCC4, XRCC6/Ku70, XRCC5/Ku86 and NHEJ1/XLF. Additional component of the NHEJ complex includes PAXX. Following autophosphorylation, PRKDC dissociates from DNA, leading to formation of the short-range NHEJ complex, composed of LIG4, XRCC4, XRCC6/Ku70, XRCC5/Ku86 and NHEJ1/XLF. Phosphorylated on serine residues.

It localises to the nucleus. It is found in the chromosome. In terms of biological role, single-stranded DNA-dependent ATP-dependent helicase that plays a key role in DNA non-homologous end joining (NHEJ) by recruiting DNA-PK to DNA. Required for double-strand break repair and V(D)J recombination. Also has a role in chromosome translocation. Has a role in chromosome translocation. The DNA helicase II complex binds preferentially to fork-like ends of double-stranded DNA in a cell cycle-dependent manner. It works in the 3'-5' direction. During NHEJ, the XRCC5-XRRC6 dimer performs the recognition step: it recognizes and binds to the broken ends of the DNA and protects them from further resection. Binding to DNA may be mediated by XRCC6. The XRCC5-XRRC6 dimer acts as a regulatory subunit of the DNA-dependent protein kinase complex DNA-PK by increasing the affinity of the catalytic subunit PRKDC to DNA by 100-fold. The XRCC5-XRRC6 dimer is probably involved in stabilizing broken DNA ends and bringing them together. The assembly of the DNA-PK complex to DNA ends is required for the NHEJ ligation step. Probably also acts as a 5'-deoxyribose-5-phosphate lyase (5'-dRP lyase), by catalyzing the beta-elimination of the 5' deoxyribose-5-phosphate at an abasic site near double-strand breaks. 5'-dRP lyase activity allows to 'clean' the termini of abasic sites, a class of nucleotide damage commonly associated with strand breaks, before such broken ends can be joined. The XRCC5-XRRC6 dimer together with APEX1 acts as a negative regulator of transcription. This is X-ray repair cross-complementing protein 5 (XRCC6) from Gallus gallus (Chicken).